The chain runs to 259 residues: Protein BEAN1 (259 aa).

Residues 36-56 form a helical membrane-spanning segment; the sequence is VLVASAVIGVVIILSCITIIV. A compositionally biased stretch (basic residues) spans 71–89; that stretch reads RHRHHRHHHHHHHHRRRRH. 2 disordered regions span residues 71 to 91 and 152 to 259; these read RHRH…RHRE and VGPG…ERIV. Residues 171-187 show a composition bias toward polar residues; it reads LTDSCPTLDGTSDSGSG. The span at 221–230 shows a compositional bias: low complexity; sequence GAGPPSGLLP.

In terms of assembly, interacts with NEDD4.

The protein localises to the membrane. The chain is Protein BEAN1 (BEAN1) from Homo sapiens (Human).